Reading from the N-terminus, the 263-residue chain is Glycerol uptake facilitator protein (263 aa).

Topologically, residues 1–7 are cytoplasmic; that stretch reads MNIYRKK. Residues 8-36 form a helical membrane-spanning segment; that stretch reads NIIKKCFMEFFGTGLVMFFGIGCLAASKL. The Extracellular portion of the chain corresponds to 37-41; the sequence is TNANF. The chain crosses the membrane as a helical span at residues 42-62; that stretch reads TQFEISCIWGFGVSIAIYFSS. The Cytoplasmic segment spans residues 63-65; the sequence is SIS. The stretch at 66 to 69 is an intramembrane region; the sequence is GAHL. Residues 70 to 72 carry the NPA 1 motif; the sequence is NPA. The segment at residues 70 to 80 is an intramembrane region (helical); that stretch reads NPAVTIFFWLS. The Cytoplasmic portion of the chain corresponds to 81–86; it reads SKLNKR. Residues 87-110 form a helical membrane-spanning segment; that stretch reads KVLPYIISQTLGSFFFTMLTYYLY. The Extracellular segment spans residues 111 to 145; sequence NNLLISFERNNNVVRGTQESLNLASIFCVYPNYNN. Residues 146 to 171 form a helical membrane-spanning segment; that stretch reads SFIYDFIIEIFSTALFILIVLEFNNR. The Cytoplasmic portion of the chain corresponds to 172–181; it reads NSNYFLYNRS. Residues 182–198 form a helical membrane-spanning segment; the sequence is VAPILTGFLVCMINLVI. Over 199 to 202 the chain is Extracellular; that stretch reads NPLN. Residues 203-206 lie within the membrane without spanning it; it reads NISL. Positions 207–209 match the NPA 2 motif; it reads NPA. An intramembrane region (helical) is located at residues 207–220; the sequence is NPARDLGPKILLSL. The Extracellular portion of the chain corresponds to 221-236; it reads TGWGLFSFTGGNDNIL. Residues 237–259 form a helical membrane-spanning segment; sequence YCFIPIMGPILGANLGGWIHKTL. Topologically, residues 260–263 are cytoplasmic; that stretch reads INNS.

It belongs to the MIP/aquaporin (TC 1.A.8) family.

It is found in the cell membrane. The enzyme catalyses glycerol(in) = glycerol(out). In terms of biological role, mediates glycerol diffusion across the cytoplasmic membrane via a pore-type mechanism. This is Glycerol uptake facilitator protein (glpF) from Buchnera aphidicola subsp. Acyrthosiphon pisum (strain APS) (Acyrthosiphon pisum symbiotic bacterium).